Consider the following 344-residue polypeptide: MAAREGRAPLVRRAAIYGGVGLAAVAGVAMWSGAGSHRGTGAAGDAPEAAAVGGVAVAASQAAVPASAGVPPSLAGSSAPRLPLDAGGHLAKSRTVRDFFDYCLTARSDLSAAALDAFVVREIAAQLDGTVAQAEALDVWHRYRAYLDALATLRDAGAVDKSDPGALQLALDQRASIAYRTLGDWSQPFFGAEQWRQRYDLARLKITQDRSLTDAQKAERLAALEQQMPADEREAQQRVDRQRAAIDQIAQLRKSGATPDAMRAQLTQTLGPEAAARVAQMQQDDASWQSRYADYAAQRTQIESAGLSPQDRDAQIAALRQRVFTKPGEAVRAASLDRGAGSAH.

The chain crosses the membrane as a helical span at residues 14–34 (AAIYGGVGLAAVAGVAMWSGA).

This sequence belongs to the lipase chaperone family.

The protein localises to the cell inner membrane. May be involved in the folding of the extracellular lipase during its passage through the periplasm. The chain is Lipase chaperone from Burkholderia cenocepacia (strain ATCC BAA-245 / DSM 16553 / LMG 16656 / NCTC 13227 / J2315 / CF5610) (Burkholderia cepacia (strain J2315)).